A 530-amino-acid polypeptide reads, in one-letter code: MARAAVLPPSRLSPTLPLLPLLLLLLQETGAQDVRVRVLPEVRGRLGGTVELPCHLLPPTTERVSQVTWQRLDGTVVAAFHPSFGVDFPNSQFSKDRLSFVRARPETNADLRDATLAFRGLRVEDEGNYTCEFATFPNGTRRGVTWLRVIAQPENHAEAQEVTIGPQSVAVARCVSTGGRPPARITWISSLGGEAKDTQEPGIQAGTVTIISRYSLVPVGRADGVKVTCRVEHESFEEPILLPVTLSVRYPPEVSISGYDDNWYLGRSEAILTCDVRSNPEPTDYDWSTTSGVFPASAVAQGSQLLVHSVDRMVNTTFICTATNAVGTGRAEQVILVRESPSTAGAGATGGIIGGIIAAIIATAVAGTGILICRQQRKEQRLQAADEEEELEGPPSYKPPTPKAKLEEPEMPSQLFTLGASEHSPVKTPYFDAGVSCADQEMPRYHELPTLEERSGPLLLGATGLGPSLLVPPGPNVVEGVSLSLEDEEEDDEEEDFLDKINPIYDALSYPSPSDSYQSKDFFVSRAMYV.

Positions methionine 1 to alanine 31 are cleaved as a signal peptide. In terms of domain architecture, Ig-like V-type spans glutamine 32–leucine 147. At glutamine 32–glycine 351 the chain is on the extracellular side. A disulfide bridge connects residues cysteine 54 and cysteine 131. N-linked (GlcNAc...) asparagine glycosylation is found at asparagine 128 and asparagine 138. Ig-like C2-type domains follow at residues proline 153–serine 247 and proline 252–valine 337. 2 disulfides stabilise this stretch: cysteine 174–cysteine 229 and cysteine 274–cysteine 320. Asparagine 315 is a glycosylation site (N-linked (GlcNAc...) asparagine). The chain crosses the membrane as a helical span at residues isoleucine 352–isoleucine 372. The Cytoplasmic segment spans residues cysteine 373–valine 530. The interval leucine 382–glutamate 407 is disordered. The residue at position 401 (threonine 401) is a Phosphothreonine. Serine 424 carries the phosphoserine modification.

This sequence belongs to the nectin family. Can form trans-heterodimers with NECTIN3. Interacts with CD226 or with PVRIG; these interactions are competitive and have a differential functional outcome on T-cell activation, either positive or negative, respectively. Binds with low affinity to TIGIT. As to expression, brain, spinal cord, spleen, kidney, heart and liver.

The protein resides in the cell membrane. In terms of biological role, modulator of T-cell signaling. Can be either a costimulator of T-cell function, or a coinhibitor, depending on the receptor it binds to. Upon binding to CD226, stimulates T-cell proliferation and cytokine production, including that of IL2, IL5, IL10, IL13, and IFNG. Upon interaction with PVRIG, inhibits T-cell proliferation. These interactions are competitive. Probable cell adhesion protein. This is Nectin-2 from Mus musculus (Mouse).